The following is a 681-amino-acid chain: Elongation factor G (681 aa).

The tr-type G domain occupies 5-279 (KNIRNIGIIA…SIVNFLPSPI (275 aa)). Residues 14–21 (AHVDAGKT), 82–86 (DTPGH), and 136–139 (NKLD) contribute to the GTP site.

The protein belongs to the TRAFAC class translation factor GTPase superfamily. Classic translation factor GTPase family. EF-G/EF-2 subfamily.

It is found in the cytoplasm. In terms of biological role, catalyzes the GTP-dependent ribosomal translocation step during translation elongation. During this step, the ribosome changes from the pre-translocational (PRE) to the post-translocational (POST) state as the newly formed A-site-bound peptidyl-tRNA and P-site-bound deacylated tRNA move to the P and E sites, respectively. Catalyzes the coordinated movement of the two tRNA molecules, the mRNA and conformational changes in the ribosome. The polypeptide is Elongation factor G (Carsonella ruddii (strain PV)).